The primary structure comprises 529 residues: Tyrosine-protein kinase Fgr (529 aa).

G2 carries the N-myristoyl glycine lipid modification. 2 S-palmitoyl cysteine lipidation sites follow: C3 and C6. A Phosphotyrosine modification is found at Y34. An SH3 domain is found at 77–138 (IGVTLFIALY…PSNYVAPVDS (62 aa)). The SH2 domain maps to 144–241 (WYFGKIGRKD…GLCNLLIAPC (98 aa)). A Phosphotyrosine modification is found at Y208. Position 218 is a phosphoserine (S218). Residues 263–516 (ITLERRLGTG…YLQSFLEDYF (254 aa)) form the Protein kinase domain. Residues 269-277 (LGTGCFGDV) and K291 each bind ATP. The active-site Proton acceptor is D382. Y412 bears the Phosphotyrosine mark. Residue Y523 is modified to Phosphotyrosine; by SRC.

Belongs to the protein kinase superfamily. Tyr protein kinase family. SRC subfamily. Interacts with ITGB1, ITGB2, MS4A2/FCER1B, FCER1G, FCGR2A and/or FCGR2B. Interacts (via SH2 domain) with SYK (tyrosine phosphorylated). Interacts (via SH2 domain) with FLT3 (tyrosine phosphorylated). Interacts with PTK2/FAK1. Interacts (via SH2 domain) with HCLS1 (tyrosine phosphorylated by SYK). Interacts with SIRPA and PTPNS1. Interacts (not phosphorylated on tyrosine residues) with CBL; FGR tyrosine phosphorylation promotes dissociation. Interacts with PIK3R1 and FASLG. Interacts with CLNK. In terms of processing, ubiquitinated. Becomes ubiquitinated in response to ITGB2 signaling; this does not lead to degradation. Post-translationally, phosphorylated. Autophosphorylated on tyrosine residues. Becomes phosphorylated in response to FCGR2A and/or FCGR2B engagement, cell adhesion and signaling by ITGB2. Prior phosphorylation at Tyr-523 by SRC inhibits ulterior autophosphorylation at Tyr-412. Detected in neutrophils, monocytes and natural killer cells (at protein level). Detected in monocytes and large lymphocytes.

Its subcellular location is the cell membrane. The protein localises to the cell projection. It localises to the ruffle membrane. The protein resides in the cytoplasm. It is found in the cytosol. Its subcellular location is the cytoskeleton. The protein localises to the mitochondrion inner membrane. It localises to the mitochondrion intermembrane space. It catalyses the reaction L-tyrosyl-[protein] + ATP = O-phospho-L-tyrosyl-[protein] + ADP + H(+). With respect to regulation, activated by autophosphorylation. Prior phosphorylation at Tyr-523 by SRC inhibits ulterior autophosphorylation at Tyr-412. Activated by phorbol myristate acetate, phosphatidic acid and poly-Lys. Binding (via SH2 domain) of HCLS1 that is already phosphorylated by SYK strongly increases kinase activity. Non-receptor tyrosine-protein kinase that transmits signals from cell surface receptors devoid of kinase activity and contributes to the regulation of immune responses, including neutrophil, monocyte, macrophage and mast cell functions, cytoskeleton remodeling in response to extracellular stimuli, phagocytosis, cell adhesion and migration. Promotes mast cell degranulation, release of inflammatory cytokines and IgE-mediated anaphylaxis. Acts downstream of receptors that bind the Fc region of immunoglobulins, such as MS4A2/FCER1B, FCGR2A and/or FCGR2B. Acts downstream of ITGB1 and ITGB2, and regulates actin cytoskeleton reorganization, cell spreading and adhesion. Depending on the context, activates or inhibits cellular responses. Functions as a negative regulator of ITGB2 signaling, phagocytosis and SYK activity in monocytes. Required for normal ITGB1 and ITGB2 signaling, normal cell spreading and adhesion in neutrophils and macrophages. Functions as a positive regulator of cell migration and regulates cytoskeleton reorganization via RAC1 activation. Phosphorylates SYK (in vitro) and promotes SYK-dependent activation of AKT1 and MAP kinase signaling. Phosphorylates PLD2 in antigen-stimulated mast cells, leading to PLD2 activation and the production of the signaling molecules lysophosphatidic acid and diacylglycerol. Promotes activation of PIK3R1. Phosphorylates FASLG, and thereby regulates its ubiquitination and subsequent internalization. Phosphorylates ABL1. Promotes phosphorylation of CBL, CTTN, PIK3R1, PTK2/FAK1, PTK2B/PYK2 and VAV2. Phosphorylates HCLS1 that has already been phosphorylated by SYK, but not unphosphorylated HCLS1. Together with CLNK, it acts as a negative regulator of natural killer cell-activating receptors and inhibits interferon-gamma production. In Homo sapiens (Human), this protein is Tyrosine-protein kinase Fgr (FGR).